Reading from the N-terminus, the 97-residue chain is MKLRPLHDRVVIRRSEEETKTAGGIVLPGSAAEKPNRGEVVAVGTGRVLDNGEVRALAVKVGDKVVFGPYSGSNAIKVDGEELLVMGESEILAVLED.

It belongs to the GroES chaperonin family. Heptamer of 7 subunits arranged in a ring. Interacts with the chaperonin GroEL.

The protein localises to the cytoplasm. In terms of biological role, together with the chaperonin GroEL, plays an essential role in assisting protein folding. The GroEL-GroES system forms a nano-cage that allows encapsulation of the non-native substrate proteins and provides a physical environment optimized to promote and accelerate protein folding. GroES binds to the apical surface of the GroEL ring, thereby capping the opening of the GroEL channel. The polypeptide is Co-chaperonin GroES (Pseudomonas aeruginosa (strain LESB58)).